Here is a 485-residue protein sequence, read N- to C-terminus: GTPase Obg (485 aa).

Residues 2–159 (SKFIDRVVLH…RDLVLELKSV (158 aa)) enclose the Obg domain. The segment at 64–84 (PHAKAGNGKPGEGGNRDGKMG) is disordered. The region spanning 160-340 (ADVGLVGFPS…LTFALADLVR (181 aa)) is the OBG-type G domain. GTP is bound by residues 166–173 (GFPSAGKS), 191–195 (FTTLV), 212–215 (DVPG), 292–295 (NKTD), and 321–323 (SAV). The Mg(2+) site is built by S173 and T193. The OCT domain occupies 358–438 (PIAVDESGFT…IGDVTFDWEP (81 aa)). Over residues 457–469 (LEQSDRVSAAERK) the composition is skewed to basic and acidic residues. A disordered region spans residues 457 to 485 (LEQSDRVSAAERKHASRVRRGLVEDDEQR).

It belongs to the TRAFAC class OBG-HflX-like GTPase superfamily. OBG GTPase family. In terms of assembly, monomer. Mg(2+) is required as a cofactor.

It localises to the cytoplasm. An essential GTPase which binds GTP, GDP and possibly (p)ppGpp with moderate affinity, with high nucleotide exchange rates and a fairly low GTP hydrolysis rate. Plays a role in control of the cell cycle, stress response, ribosome biogenesis and in those bacteria that undergo differentiation, in morphogenesis control. The sequence is that of GTPase Obg from Nocardia farcinica (strain IFM 10152).